A 419-amino-acid chain; its full sequence is L-rhamnose isomerase (419 aa).

His262, Asp294, and Asp296 together coordinate Mn(2+).

Belongs to the rhamnose isomerase family. Homotetramer. The cofactor is Mn(2+).

The protein localises to the cytoplasm. The catalysed reaction is L-rhamnopyranose = L-rhamnulose. It functions in the pathway carbohydrate degradation; L-rhamnose degradation; glycerone phosphate from L-rhamnose: step 1/3. Functionally, catalyzes the interconversion of L-rhamnose and L-rhamnulose. The polypeptide is L-rhamnose isomerase (Salmonella typhimurium (strain LT2 / SGSC1412 / ATCC 700720)).